A 197-amino-acid polypeptide reads, in one-letter code: Probable nicotinate-nucleotide adenylyltransferase (197 aa).

This sequence belongs to the NadD family.

It carries out the reaction nicotinate beta-D-ribonucleotide + ATP + H(+) = deamido-NAD(+) + diphosphate. It functions in the pathway cofactor biosynthesis; NAD(+) biosynthesis; deamido-NAD(+) from nicotinate D-ribonucleotide: step 1/1. Functionally, catalyzes the reversible adenylation of nicotinate mononucleotide (NaMN) to nicotinic acid adenine dinucleotide (NaAD). In Borrelia garinii subsp. bavariensis (strain ATCC BAA-2496 / DSM 23469 / PBi) (Borreliella bavariensis), this protein is Probable nicotinate-nucleotide adenylyltransferase.